The chain runs to 372 residues: Homoserine dehydrogenase (372 aa).

Valine 13, glycine 15, valine 16, and threonine 99 together coordinate NAD(+). The NADP(+) site is built by valine 16 and threonine 99. Positions 16, 99, 100, and 123 each coordinate NADPH. An NADP(+)-binding site is contributed by lysine 123. Na(+)-binding residues include glutamate 150, valine 153, alanine 155, and leucine 157. The NADP(+) site is built by glycine 216 and glutamate 219. Residues glutamate 219 and aspartate 230 each coordinate L-homoserine. Lysine 234 (proton donor) is an active-site residue. Glycine 352 is an NAD(+) binding site. Glycine 352 serves as a coordination point for NADP(+). Glycine 352 is a binding site for NADPH.

It belongs to the homoserine dehydrogenase family. Homodimer. It depends on a metal cation as a cofactor.

The enzyme catalyses L-homoserine + NADP(+) = L-aspartate 4-semialdehyde + NADPH + H(+). It carries out the reaction L-homoserine + NAD(+) = L-aspartate 4-semialdehyde + NADH + H(+). Its pathway is amino-acid biosynthesis; L-methionine biosynthesis via de novo pathway; L-homoserine from L-aspartate: step 3/3. The protein operates within amino-acid biosynthesis; L-threonine biosynthesis; L-threonine from L-aspartate: step 3/5. Functionally, catalyzes the conversion of L-aspartate-beta-semialdehyde (L-Asa) to L-homoserine (L-Hse), the third step in the biosynthesis of amino acids that derive from aspartate (the aspartate family of amino acids), including methioinine and threonine, the latter of which is a precursor to isoleucine; production of homoserine leads to a branch-point in the pathway as it can either be O-phosphorylated for processing to threonine, or O-acylated for processing to methionine. This is Homoserine dehydrogenase from Paracoccidioides brasiliensis (strain Pb18).